Here is a 385-residue protein sequence, read N- to C-terminus: Homoserine O-succinyltransferase (385 aa).

An AB hydrolase-1 domain is found at Asn-45 to Asp-355. The active-site Nucleophile is Ser-151. Arg-221 serves as a coordination point for substrate. Residues Asp-316 and His-349 contribute to the active site. Residue Asp-350 participates in substrate binding.

The protein belongs to the AB hydrolase superfamily. MetX family. As to quaternary structure, homodimer.

Its subcellular location is the cytoplasm. The catalysed reaction is L-homoserine + succinyl-CoA = O-succinyl-L-homoserine + CoA. It functions in the pathway amino-acid biosynthesis; L-methionine biosynthesis via de novo pathway; O-succinyl-L-homoserine from L-homoserine: step 1/1. Its function is as follows. Transfers a succinyl group from succinyl-CoA to L-homoserine, forming succinyl-L-homoserine. The chain is Homoserine O-succinyltransferase from Janthinobacterium sp. (strain Marseille) (Minibacterium massiliensis).